The sequence spans 178 residues: Endothelin-2 (178 aa).

The N-terminal stretch at M1–G24 is a signal peptide. Positions Q25–P46 are excised as a propeptide. Intrachain disulfides connect C49-C63 and C51-C59. Residues V70–T178 constitute a propeptide that is removed on maturation. Residues C96–H111 are endothelin-like. The disordered stretch occupies residues A158–T178. The segment covering Q160–R169 has biased composition (basic and acidic residues).

Belongs to the endothelin/sarafotoxin family.

Its subcellular location is the secreted. Endothelins are endothelium-derived vasoconstrictor peptides. The protein is Endothelin-2 (EDN2) of Mustela putorius furo (European domestic ferret).